A 184-amino-acid polypeptide reads, in one-letter code: Ras-related protein Rap1 (184 aa).

10–17 serves as a coordination point for GTP; that stretch reads GSGGVGKS. An Effector region motif is present at residues 32–40; the sequence is YDPTIEDSY. Residues 57-61 and 116-119 contribute to the GTP site; these read DTAGT and NKCD. Position 181 is a cysteine methyl ester (cysteine 181). A lipid anchor (S-geranylgeranyl cysteine) is attached at cysteine 181. A propeptide spans 182-184 (removed in mature form); sequence VLL.

This sequence belongs to the small GTPase superfamily. Ras family.

Its subcellular location is the cell membrane. The enzyme catalyses GTP + H2O = GDP + phosphate + H(+). With respect to regulation, alternates between an inactive form bound to GDP and an active form bound to GTP. Activated by a guanine nucleotide-exchange factor (GEF) and inactivated by a GTPase-activating protein (GAP). Ras proteins bind GDP/GTP and possess intrinsic GTPase activity. Plays a role in photoreceptor cell determination. The chain is Ras-related protein Rap1 from Drosophila melanogaster (Fruit fly).